Here is a 2413-residue protein sequence, read N- to C-terminus: Pre-mRNA-splicing factor 8 (2413 aa).

Pro residues-rich tracts occupy residues 1 to 10 (MSGLPPPPPG) and 19 to 28 (LPPPPPPPPG). Positions 1-60 (MSGLPPPPPGFEEDSDLALPPPPPPPPGYEIEELDNPMVPSSVNEDTFLPPPPPPPSNFE) are disordered. The tract at residues 253-543 (QHIENIEPLD…LHPTLPTNHN (291 aa)) is SNU114/CWC21 interacting domain (SCwid). The segment at 885 to 1375 (VMVEWLESRS…RIQNRVKLGL (491 aa)) is reverse transcriptase homology domain. The tract at residues 1376–1649 (NSKMPTRFPP…TLKISLIQIF (274 aa)) is linker. The tract at residues 1585-1598 (MQFKKLTHAQRTGL) is important for branch point selection. A restriction endonuclease homology domain region spans residues 1653–1824 (LWQKIHESIV…LRERIRKGLQ (172 aa)). An RNase H homology domain region spans residues 1839–2092 (NYAELFNNDI…ILGQNIKAPS (254 aa)). In terms of domain architecture, MPN spans 2182–2311 (VYVLPKNLLK…LSAYNLTDEG (130 aa)).

As to quaternary structure, component of the U4/U6-U5 tri-snRNP complex composed of the U4, U6 and U5 snRNAs and at least PRP3, PRP4, PRP6, PRP8, PRP18, PRP31, PRP38, SNU13, SNU23, SNU66, SNU114, SPP381, SMB1, SMD1, SMD2, SMD3, SMX2, SMX3, LSM2, LSM3, LSM4, LSM5, LSM6, LSM7, LSM8, BRR2 and DIB1. Belongs to the CWC complex (or CEF1-associated complex), a spliceosome sub-complex reminiscent of a late-stage spliceosome composed of the U2, U5 and U6 snRNAs and at least BUD13, BUD31, BRR2, CDC40, CEF1, CLF1, CUS1, CWC2, CWC15, CWC21, CWC22, CWC23, CWC24, CWC25, CWC27, ECM2, HSH155, IST3, ISY1, LEA1, MSL1, NTC20, PRP8, PRP9, PRP11, PRP19, PRP21, PRP22, PRP45, PRP46, SLU7, SMB1, SMD1, SMD2, SMD3, SMX2, SMX3, SNT309, SNU114, SPP2, SYF1, SYF2, RSE1 and YJU2. Interacts with PRP40 and SNP1. Interacts (via SCwid domain) with CWC21. Interacts (via SCwid domain) with SNU114 (via N-terminus). Interacts (via RNase H homology domain and MPN domain) with BRR2; this modulates BRR2 ATPase and helicase activity. Interacts (via RNase H homology domain) with AAR2. AAR2 and BRR2 compete for PRP8 binding, and during U5 snRNP maturation BRR2 displaces the initially bound AAR2. Is associated with snRNP U5, together with SNU114 and BRR2.

The protein localises to the nucleus. Functionally, functions as a scaffold that mediates the ordered assembly of spliceosomal proteins and snRNAs. Required for association of BRR2 with the spliceosomal U5 snRNP, and the subsequent assembly of the U4/U6-U5 tri-snRNP complex. Functions as a scaffold that positions spliceosomal U2, U5 and U6 snRNAs at splice sites on pre-mRNA substrates, so that splicing can occur. Interacts with both the 5' and the 3' splice site, as well as the branch region. Has a role in branch site-3' splice site selection. Associates with the branch site-3' splice 3'-exon region. Also has a role in cell cycle. The sequence is that of Pre-mRNA-splicing factor 8 (PRP8) from Saccharomyces cerevisiae (strain ATCC 204508 / S288c) (Baker's yeast).